The chain runs to 213 residues: Signal recognition particle sec65 subunit (213 aa).

A disordered region spans residues 176-213 (MAALAGMGGPAPPMPTPQASSSQRKQKSIEPEYDLDLE).

Belongs to the SRP19 family. In terms of assembly, fungal signal recognition particle consists of a 7S RNA molecule (scR1) and at least six protein subunits: srp72, srp68, srp54, sec65, srp21 and srp14.

The protein localises to the cytoplasm. It localises to the nucleus. Functionally, signal-recognition-particle assembly has a crucial role in targeting secretory proteins to the rough endoplasmic reticulum membrane. It must be involved intimately in the translocation of a wide variety of protein substrates. In Schizosaccharomyces pombe (strain 972 / ATCC 24843) (Fission yeast), this protein is Signal recognition particle sec65 subunit (sec65).